The chain runs to 127 residues: Large ribosomal subunit protein bL20 (127 aa).

Belongs to the bacterial ribosomal protein bL20 family.

Functionally, binds directly to 23S ribosomal RNA and is necessary for the in vitro assembly process of the 50S ribosomal subunit. It is not involved in the protein synthesizing functions of that subunit. The sequence is that of Large ribosomal subunit protein bL20 from Bifidobacterium animalis subsp. lactis (strain AD011).